A 290-amino-acid polypeptide reads, in one-letter code: Acetyl-coenzyme A carboxylase carboxyl transferase subunit beta (290 aa).

The CoA carboxyltransferase N-terminal domain occupies 28-290 (VMTKCPQCKK…GGGESGWWRN (263 aa)). The Zn(2+) site is built by C32, C35, C51, and C54. The segment at 32 to 54 (CPQCKKIMYTKELVKNLRVCLSC) adopts a C4-type zinc-finger fold.

It belongs to the AccD/PCCB family. As to quaternary structure, acetyl-CoA carboxylase is a heterohexamer composed of biotin carboxyl carrier protein (AccB), biotin carboxylase (AccC) and two subunits each of ACCase subunit alpha (AccA) and ACCase subunit beta (AccD). Zn(2+) serves as cofactor.

Its subcellular location is the cytoplasm. It carries out the reaction N(6)-carboxybiotinyl-L-lysyl-[protein] + acetyl-CoA = N(6)-biotinyl-L-lysyl-[protein] + malonyl-CoA. The protein operates within lipid metabolism; malonyl-CoA biosynthesis; malonyl-CoA from acetyl-CoA: step 1/1. Component of the acetyl coenzyme A carboxylase (ACC) complex. Biotin carboxylase (BC) catalyzes the carboxylation of biotin on its carrier protein (BCCP) and then the CO(2) group is transferred by the transcarboxylase to acetyl-CoA to form malonyl-CoA. This chain is Acetyl-coenzyme A carboxylase carboxyl transferase subunit beta, found in Geobacillus thermodenitrificans (strain NG80-2).